We begin with the raw amino-acid sequence, 376 residues long: Geranylgeranyl transferase type-1 subunit beta (376 aa).

4 PFTB repeats span residues 128-179 (KRSL…YICG), 192-231 (TEKLLGYIMSQQCYNGAFGAHNEPHSGYTSCALSTLALLS), 259-301 (MKFE…HLLT), and 310-353 (TELV…ALIE). Geranylgeranyl diphosphate is bound by residues 216–218 (HSG) and 280–283 (RENK). The Zn(2+) site is built by Asp286 and Cys288. 289 to 292 (YAFW) serves as a coordination point for geranylgeranyl diphosphate. Zn(2+) is bound at residue His341.

This sequence belongs to the protein prenyltransferase subunit beta family. Heterodimer of an alpha (RAM2) and a beta (CDC43) subunit. Requires Zn(2+) as cofactor. Mg(2+) serves as cofactor.

The protein localises to the cytoplasm. It carries out the reaction geranylgeranyl diphosphate + L-cysteinyl-[protein] = S-geranylgeranyl-L-cysteinyl-[protein] + diphosphate. Its function is as follows. Catalyzes the transfer of a geranyl-geranyl moiety from geranyl-geranyl diphosphate to proteins having the C-terminal sequence Cys-Ile-Ile-Leu or Cys-Val-Leu-Leu. Acts, among other substrates, on Rho1 and Rho2 and CDC42 proteins. Participates in a RAS-like C-terminal modification of proteins involved in nuclear division and bud growth. It is involved in bud positioning and cell polarity. The beta subunit is responsible for isoprenoid and peptide-binding. The sequence is that of Geranylgeranyl transferase type-1 subunit beta (CDC43) from Saccharomyces cerevisiae (strain ATCC 204508 / S288c) (Baker's yeast).